The sequence spans 190 residues: Female-specific histamine-binding protein 1 (190 aa).

The N-terminal stretch at 1–18 (MKLLLSLAFVLALSQVKA) is a signal peptide. Histamine is bound by residues tyrosine 54, aspartate 57, tryptophan 60, glutamate 100, tyrosine 118, glutamate 153, and tryptophan 155. Cystine bridges form between cysteine 66–cysteine 187 and cysteine 137–cysteine 166.

The protein belongs to the calycin superfamily. Histamine-binding salivary protein family. As to quaternary structure, monomer. In terms of tissue distribution, expressed in salivary glands.

It localises to the secreted. Functionally, salivary tick protein that acts by scavenging histamine at the wound site, outcompeting histamine receptors for histamine, thereby overcoming host inflammatory responses. Binds histamine with a high-affinity (Kd=18 nM). Contains two binding histamine sites (H and L), that appear to bind histamine with differing affinities (high and low). In vivo, when tested on a mouse asthma model, shows a profound inhibitory effect on allergic asthma. Aerosol administration of this protein prevents airway hyperreactivity and abrogates peribronchial inflammation, eosinophil recruitment, mucus hypersecretion, and interleukins (IL-4 and IL-5) secretion. In addition, when tested on a mouse model of acute respiratory distress syndrome (ARDS), it attenuates endotoxin-induced acute lung injury. The polypeptide is Female-specific histamine-binding protein 1 (Rhipicephalus appendiculatus (Brown ear tick)).